The chain runs to 80 residues: Protein Vpu (80 aa).

The Extracellular portion of the chain corresponds to 1–7; sequence MLSLQIL. The helical transmembrane segment at 8–28 threads the bilayer; it reads AIVALVVAAIIAIVVWSIVFI. The Cytoplasmic segment spans residues 29-80; sequence EYRKILRQRKIDRLIDRIREREEDSGNESEGDQEELAALERGHLAPWDVDDL. Positions 49–80 are disordered; it reads REEDSGNESEGDQEELAALERGHLAPWDVDDL. 2 positions are modified to phosphoserine; by host CK2: Ser53 and Ser57. Residues 53–65 show a composition bias toward acidic residues; sequence SGNESEGDQEELA.

It belongs to the HIV-1 VPU protein family. In terms of assembly, homopentamer. Interacts with host CD4 and BRTC; these interactions induce proteasomal degradation of CD4. Interacts with host BST2; this interaction leads to the degradation of host BST2. Interacts with host FBXW11. Interacts with host AP1M1; this interaction plays a role in the mistrafficking and subsequent degradation of host BST2. Interacts with host RANBP2; this interaction allows Vpu to down-regulate host BLM sumoylation. Phosphorylated by host CK2. This phosphorylation is necessary for interaction with human BTRC and degradation of CD4.

Its subcellular location is the host membrane. Its activity is regulated as follows. Ion channel activity is inhibited by hexamethylene amiloride in vitro. Enhances virion budding by targeting host CD4 and Tetherin/BST2 to proteasome degradation. Degradation of CD4 prevents any unwanted premature interactions between viral Env and its host receptor CD4 in the endoplasmic reticulum. Degradation of antiretroviral protein Tetherin/BST2 is important for virion budding, as BST2 tethers new viral particles to the host cell membrane. Mechanistically, Vpu bridges either CD4 or BST2 to BTRC, a substrate recognition subunit of the Skp1/Cullin/F-box protein E3 ubiquitin ligase, induces their ubiquitination and subsequent proteasomal degradation. The alteration of the E3 ligase specificity by Vpu seems to promote the degradation of host IKBKB, leading to NF-kappa-B down-regulation and subsequent apoptosis. Acts as a viroporin that forms an oligomeric ion channel in membranes. Modulates the host DNA repair mechanisms to promote degradation of nuclear viral cDNA in cells that are already productively infected in order to suppress immune sensing and proviral hyper-integration (superinfection). Manipulates PML-NBs and modulates SUMOylation of host BLM protein thereby enhancing its DNA-end processing activity toward viral unintegrated linear DNA. Also inhibits RAD52-mediated homologous repair of viral cDNA, preventing the generation of dead-end circular forms of single copies of the long terminal repeat and permitting sustained nucleolytic attack. The protein is Protein Vpu of Human immunodeficiency virus type 1 group M subtype B (strain 89.6) (HIV-1).